The chain runs to 483 residues: Iroquois-class homeodomain protein IRX-5 (483 aa).

The homeobox; TALE-type DNA-binding region spans 113 to 175; the sequence is DPAYRKNATR…NARRRLKKEN (63 aa). Disordered regions lie at residues 177–392 and 423–442; these read MTWT…QCPF and GHPG…FNGL. A compositionally biased stretch (acidic residues) spans 186-203; the sequence is EDEEEEENIDLEKNDEDE. Basic and acidic residues-rich tracts occupy residues 204-213 and 250-261; these read PQKPEDKGDP and SDFKEPPSEGRL. Composition is skewed to low complexity over residues 266-282 and 374-388; these read GPPR…AAAR and SRAS…SPSA. Position 274 is a phosphoserine (S274). S464 carries the post-translational modification Phosphoserine.

The protein belongs to the TALE/IRO homeobox family.

It localises to the nucleus. In terms of biological role, establishes the cardiac repolarization gradient by its repressive actions on the KCND2 potassium-channel gene. Required for retinal cone bipolar cell differentiation. May regulate contrast adaptation in the retina and control specific aspects of visual function in circuits of the mammalian retina. Could be involved in the regulation of both the cell cycle and apoptosis in prostate cancer cells. Involved in craniofacial and gonadal development. Modulates the migration of progenitor cell populations in branchial arches and gonads by repressing CXCL12. This chain is Iroquois-class homeodomain protein IRX-5 (IRX5), found in Homo sapiens (Human).